Reading from the N-terminus, the 355-residue chain is Endonuclease III homolog (355 aa).

The Nuclear localization signal signature appears at 44 to 50; it reads PKKFRFQ. In terms of domain architecture, HhH spans 122–149; that stretch reads FQGDIPDTVEDLMTLPGVGPKMGYLCMS. Lysine 142 functions as the Nucleophile; for N-glycosylase activity in the catalytic mechanism. [4Fe-4S] cluster is bound by residues cysteine 210, cysteine 217, cysteine 220, and cysteine 228. Residues 252-255 carry the Nuclear localization signal motif; sequence KKRP. Residues 303–355 are disordered; it reads KEPAADIDVDQKPPVAFHSTTKETRSLRRSKRVAKKSSQYFSQQSLQDIEDLV. A compositionally biased stretch (polar residues) spans 338 to 349; sequence KSSQYFSQQSLQ.

It belongs to the Nth/MutY family. Requires [4Fe-4S] cluster as cofactor.

It localises to the nucleus. Its subcellular location is the mitochondrion. The enzyme catalyses 2'-deoxyribonucleotide-(2'-deoxyribose 5'-phosphate)-2'-deoxyribonucleotide-DNA = a 3'-end 2'-deoxyribonucleotide-(2,3-dehydro-2,3-deoxyribose 5'-phosphate)-DNA + a 5'-end 5'-phospho-2'-deoxyribonucleoside-DNA + H(+). Bifunctional DNA N-glycosylase with associated apurinic/apyrimidinic (AP) lyase function that catalyzes the first step in base excision repair (BER), the primary repair pathway for the repair of oxidative DNA damage. The DNA N-glycosylase activity releases the damaged DNA base from DNA by cleaving the N-glycosidic bond, leaving an AP site. The AP-lyase activity cleaves the phosphodiester bond 3' to the AP site by a beta-elimination. Primarily recognizes and repairs oxidative base damage of pyrimidines. Also has 8-oxo-7,8-dihydroguanine (8-oxoG) DNA glycosylase activity. Also involved in the repair of 7-methylguanine lesions, although it cannot directly repair alkylated DNA bases. Probably does so via excision of methylformamidopyrimidine (mFapy) lesions, a spontaneous processing product of 7-methylguanine. The protein is Endonuclease III homolog (nth1) of Schizosaccharomyces pombe (strain 972 / ATCC 24843) (Fission yeast).